The primary structure comprises 1871 residues: Callose synthase 4 (1871 aa).

The Cytoplasmic segment spans residues 1–491 (MNQPNRGQIL…FWHLFRSFDR (491 aa)). Residues 492 to 512 (MWSFYILSLQAMIIIAWNETS) form a helical membrane-spanning segment. Topologically, residues 513 to 521 (ESGGAVFHK) are extracellular. Residues 522–542 (VLSVFITAAKLNLFQAFLDIA) traverse the membrane as a helical segment. The Cytoplasmic segment spans residues 543-558 (LSWKARHSMSTHVRQR). Residues 559 to 579 (YIFKAVAAAVWVLLMPLTYAY) traverse the membrane as a helical segment. Over 580 to 583 (SHTS) the chain is Extracellular. Residues 584-604 (IFIVAILIYLSPNMLPEMLLL) form a helical membrane-spanning segment. The Cytoplasmic segment spans residues 605–640 (IPSIRRTLEKSDFRPVKLIMWWSQPELYIGRGMHES). Residues 641 to 661 (AWSIYKYMMFWIVLLTSKLAF) form a helical membrane-spanning segment. Residues 662–701 (SYYVEQIKPLMGPTKEIMSVPMPGYWLPEFFPHVKNNRGV) are Extracellular-facing. The helical transmembrane segment at 702-724 (VITLWSPVILVYFMDTQIWYAIV) threads the bilayer. Residues 725–1441 (STLVGGLYGA…FDFFRMLSCY (717 aa)) lie on the Cytoplasmic side of the membrane. A helical membrane pass occupies residues 1442 to 1462 (FTTVGFYFCSMLTVLTVYVFL). At 1463–1485 (YGRLYLVLSGVEKELGNKPMMME) the chain is on the extracellular side. A helical membrane pass occupies residues 1486 to 1506 (IILASQSFVQIVFLMAMPMIM). The Cytoplasmic portion of the chain corresponds to 1507–1516 (EIGLERGFYD). A helical transmembrane segment spans residues 1517–1537 (ALFDFVLMQLQLASVFFTFQL). The Extracellular segment spans residues 1538-1580 (GTKFHYYCKTLLHGGAEYRGTGRGFVVFHAKFAENYRFYSRSH). 2 consecutive transmembrane segments (helical) span residues 1581–1601 (FVKA…GPTY) and 1602–1622 (IGLF…APFL). Topologically, residues 1623 to 1675 (FNPSGFEWHEIVEDWADWKKWIEYDNGGIGVPPEKSWESWWEKDIEHLQHSGK) are extracellular. A helical membrane pass occupies residues 1676–1696 (WGIVVEIFFALRFFIFQYGLV). The Cytoplasmic portion of the chain corresponds to 1697–1708 (YQLSAFKNKYSS). A helical transmembrane segment spans residues 1709–1729 (LWVFGASWLLILILLLTVTVL). Topologically, residues 1730-1741 (DYARRRLGTEFQ) are extracellular. The chain crosses the membrane as a helical span at residues 1742–1762 (LLFRIIKVSLFLAFMAIFITL). Residues 1763-1772 (MTCRLILPQD) lie on the Cytoplasmic side of the membrane. The helical transmembrane segment at 1773-1793 (VFLCMLALIPTGWGLLLIAQS) threads the bilayer. Residues 1794 to 1815 (CKPLIQQPGIWSWVMTLAWVYD) lie on the Extracellular side of the membrane. The helical transmembrane segment at 1816–1836 (LVMGSLLFIPIAFMAWFPFIS) threads the bilayer. Residues 1837–1871 (EFQTRMLFNQAFSRGLHISRILSGQRKHRSSKNKD) lie on the Cytoplasmic side of the membrane.

This sequence belongs to the glycosyltransferase 48 family.

It is found in the cell membrane. The enzyme catalyses [(1-&gt;3)-beta-D-glucosyl](n) + UDP-alpha-D-glucose = [(1-&gt;3)-beta-D-glucosyl](n+1) + UDP + H(+). Functionally, involved in callose synthesis at the forming cell plate during cytokinesis. During plant growth and development, callose is found as a transitory component of the cell plate in dividing cells, is a major component of pollen mother cell walls and pollen tubes, and is found as a structural component of plasmodesmatal canals. The polypeptide is Callose synthase 4 (CALS4) (Arabidopsis thaliana (Mouse-ear cress)).